Reading from the N-terminus, the 292-residue chain is GTP cyclohydrolase FolE2 (292 aa).

It belongs to the GTP cyclohydrolase IV family.

It carries out the reaction GTP + H2O = 7,8-dihydroneopterin 3'-triphosphate + formate + H(+). It functions in the pathway cofactor biosynthesis; 7,8-dihydroneopterin triphosphate biosynthesis; 7,8-dihydroneopterin triphosphate from GTP: step 1/1. Converts GTP to 7,8-dihydroneopterin triphosphate. This chain is GTP cyclohydrolase FolE2, found in Staphylococcus epidermidis (strain ATCC 12228 / FDA PCI 1200).